Reading from the N-terminus, the 309-residue chain is Olfactory receptor 5H17 (309 aa).

Residues methionine 1–phenylalanine 28 are Extracellular-facing. N-linked (GlcNAc...) asparagine glycosylation occurs at asparagine 5. The helical transmembrane segment at leucine 29 to isoleucine 49 threads the bilayer. At tryptophan 50–histidine 56 the chain is on the cytoplasmic side. A helical transmembrane segment spans residues isoleucine 57–valine 77. Topologically, residues threonine 78–serine 93 are extracellular. Residues valine 94 to leucine 114 traverse the membrane as a helical segment. Residues cysteine 97 and cysteine 189 are joined by a disulfide bond. At leucine 115–leucine 144 the chain is on the cytoplasmic side. The helical transmembrane segment at leucine 145 to arginine 165 threads the bilayer. Topologically, residues leucine 166–isoleucine 198 are extracellular. Residues isoleucine 199 to threonine 219 form a helical membrane-spanning segment. At phenylalanine 220–serine 239 the chain is on the cytoplasmic side. Residues threonine 240–valine 260 traverse the membrane as a helical segment. Over histidine 261–aspartate 271 the chain is Extracellular. Residues methionine 272–leucine 292 form a helical membrane-spanning segment. At arginine 293–valine 309 the chain is on the cytoplasmic side.

The protein belongs to the G-protein coupled receptor 1 family.

It is found in the cell membrane. Potential odorant receptor. The polypeptide is Olfactory receptor 5H17 (Mus musculus (Mouse)).